Consider the following 510-residue polypeptide: 2,3-bisphosphoglycerate-independent phosphoglycerate mutase (510 aa).

Residues Asp12 and Ser62 each contribute to the Mn(2+) site. The Phosphoserine intermediate role is filled by Ser62. Residues His123, 153-154, Arg185, Arg191, 260-263, and Lys335 each bind substrate; these read RD and RPDR. The Mn(2+) site is built by Asp402, His406, Asp443, His444, and His461.

Belongs to the BPG-independent phosphoglycerate mutase family. In terms of assembly, monomer. The cofactor is Mn(2+).

It catalyses the reaction (2R)-2-phosphoglycerate = (2R)-3-phosphoglycerate. Its pathway is carbohydrate degradation; glycolysis; pyruvate from D-glyceraldehyde 3-phosphate: step 3/5. Catalyzes the interconversion of 2-phosphoglycerate and 3-phosphoglycerate. In Listeria welshimeri serovar 6b (strain ATCC 35897 / DSM 20650 / CCUG 15529 / CIP 8149 / NCTC 11857 / SLCC 5334 / V8), this protein is 2,3-bisphosphoglycerate-independent phosphoglycerate mutase.